A 91-amino-acid chain; its full sequence is Small ribosomal subunit protein uS19 (91 aa).

Belongs to the universal ribosomal protein uS19 family.

In terms of biological role, protein S19 forms a complex with S13 that binds strongly to the 16S ribosomal RNA. This chain is Small ribosomal subunit protein uS19, found in Psychrobacter arcticus (strain DSM 17307 / VKM B-2377 / 273-4).